The chain runs to 332 residues: Glycerol-3-phosphate dehydrogenase [NAD(P)+] (332 aa).

Residues W13, K34, and K108 each contribute to the NADPH site. K108, G136, and S138 together coordinate sn-glycerol 3-phosphate. A140 provides a ligand contact to NADPH. Sn-glycerol 3-phosphate is bound by residues K191, D244, S254, R255, and N256. K191 functions as the Proton acceptor in the catalytic mechanism. R255 serves as a coordination point for NADPH. Residues V279 and E281 each coordinate NADPH.

It belongs to the NAD-dependent glycerol-3-phosphate dehydrogenase family.

The protein resides in the cytoplasm. The catalysed reaction is sn-glycerol 3-phosphate + NAD(+) = dihydroxyacetone phosphate + NADH + H(+). It carries out the reaction sn-glycerol 3-phosphate + NADP(+) = dihydroxyacetone phosphate + NADPH + H(+). Its pathway is membrane lipid metabolism; glycerophospholipid metabolism. Functionally, catalyzes the reduction of the glycolytic intermediate dihydroxyacetone phosphate (DHAP) to sn-glycerol 3-phosphate (G3P), the key precursor for phospholipid synthesis. In Francisella tularensis subsp. tularensis (strain FSC 198), this protein is Glycerol-3-phosphate dehydrogenase [NAD(P)+].